We begin with the raw amino-acid sequence, 473 residues long: Chromosomal replication initiator protein DnaA (473 aa).

The tract at residues 1 to 76 is domain I, interacts with DnaA modulators; it reads MNYHSTNVNE…RTVLGRVIGP (76 aa). The interval 76–135 is domain II; sequence PNASLQYNALVDNSSPKYPGTVTLAGCADGGQAAEQFDVNLLHRHMPNAATHSEAQDFDT. The segment at 136 to 353 is domain III, AAA+ region; that stretch reads QLNSRLNFRN…GTLVSLITNS (218 aa). The ATP site is built by Gly181, Gly183, Lys184, and Thr185. Residues 354 to 473 form a domain IV, binds dsDNA region; the sequence is VVVGKEIDLT…VERAEQLIAN (120 aa).

Belongs to the DnaA family. In terms of assembly, oligomerizes as a right-handed, spiral filament on DNA at oriC.

Its subcellular location is the cytoplasm. Functionally, plays an essential role in the initiation and regulation of chromosomal replication. ATP-DnaA binds to the origin of replication (oriC) to initiate formation of the DNA replication initiation complex once per cell cycle. Binds the DnaA box (a 9 base pair repeat at the origin) and separates the double-stranded (ds)DNA. Forms a right-handed helical filament on oriC DNA; dsDNA binds to the exterior of the filament while single-stranded (ss)DNA is stabiized in the filament's interior. The ATP-DnaA-oriC complex binds and stabilizes one strand of the AT-rich DNA unwinding element (DUE), permitting loading of DNA polymerase. After initiation quickly degrades to an ADP-DnaA complex that is not apt for DNA replication. Binds acidic phospholipids. The chain is Chromosomal replication initiator protein DnaA from Porphyromonas gingivalis (strain ATCC 33277 / DSM 20709 / CIP 103683 / JCM 12257 / NCTC 11834 / 2561).